The following is a 51-amino-acid chain: Protein HokD (51 aa).

A helical transmembrane segment spans residues Lys-5–Thr-25.

It belongs to the Hok/Gef family.

The protein resides in the cell inner membrane. Toxic component of a type I toxin-antitoxin (TA) system. When overexpressed kills cells within minutes; causes collapse of the transmembrane potential and arrest of respiration. Its toxic effect is probably neutralized by an antisense antitoxin Sok RNA. This is Protein HokD (hokD) from Escherichia coli O157:H7.